Here is a 280-residue protein sequence, read N- to C-terminus: Acyl-[acyl-carrier-protein]--UDP-N-acetylglucosamine O-acyltransferase (280 aa).

It belongs to the transferase hexapeptide repeat family. LpxA subfamily. Homotrimer.

Its subcellular location is the cytoplasm. The catalysed reaction is a (3R)-hydroxyacyl-[ACP] + UDP-N-acetyl-alpha-D-glucosamine = a UDP-3-O-[(3R)-3-hydroxyacyl]-N-acetyl-alpha-D-glucosamine + holo-[ACP]. It participates in glycolipid biosynthesis; lipid IV(A) biosynthesis; lipid IV(A) from (3R)-3-hydroxytetradecanoyl-[acyl-carrier-protein] and UDP-N-acetyl-alpha-D-glucosamine: step 1/6. In terms of biological role, involved in the biosynthesis of lipid A, a phosphorylated glycolipid that anchors the lipopolysaccharide to the outer membrane of the cell. The polypeptide is Acyl-[acyl-carrier-protein]--UDP-N-acetylglucosamine O-acyltransferase (Chlamydia muridarum (strain MoPn / Nigg)).